We begin with the raw amino-acid sequence, 138 residues long: Large ribosomal subunit protein uL16 (138 aa).

Basic residues predominate over residues 1–19 (MLSPKRTKYRKAHKGRIHG). The segment at 1-21 (MLSPKRTKYRKAHKGRIHGNA) is disordered.

The protein belongs to the universal ribosomal protein uL16 family. Part of the 50S ribosomal subunit.

Functionally, binds 23S rRNA and is also seen to make contacts with the A and possibly P site tRNAs. The chain is Large ribosomal subunit protein uL16 from Granulibacter bethesdensis (strain ATCC BAA-1260 / CGDNIH1).